A 183-amino-acid polypeptide reads, in one-letter code: Large ribosomal subunit protein uL5 (183 aa).

This sequence belongs to the universal ribosomal protein uL5 family. Part of the 50S ribosomal subunit; contacts the 5S rRNA and probably tRNA. Forms a bridge to the 30S subunit in the 70S ribosome.

Its function is as follows. This is one of the proteins that bind and probably mediate the attachment of the 5S RNA into the large ribosomal subunit, where it forms part of the central protuberance. In the 70S ribosome it contacts protein S13 of the 30S subunit (bridge B1b), connecting the 2 subunits; this bridge is implicated in subunit movement. May contact the P site tRNA; the 5S rRNA and some of its associated proteins might help stabilize positioning of ribosome-bound tRNAs. The sequence is that of Large ribosomal subunit protein uL5 from Thermococcus kodakarensis (strain ATCC BAA-918 / JCM 12380 / KOD1) (Pyrococcus kodakaraensis (strain KOD1)).